Here is a 570-residue protein sequence, read N- to C-terminus: Urease subunit alpha (570 aa).

Residues His137, His139, and Lys220 each contribute to the Ni(2+) site. Lys220 carries the N6-carboxylysine modification. His222 lines the substrate pocket. Residues His249 and His275 each coordinate Ni(2+). The Proton donor role is filled by His323. Asp363 contributes to the Ni(2+) binding site.

This sequence belongs to the metallo-dependent hydrolases superfamily. Urease alpha subunit family. As to quaternary structure, heterotrimer of UreA (gamma), UreB (beta) and UreC (alpha) subunits. Three heterotrimers associate to form the active enzyme. Ni cation serves as cofactor. Carboxylation allows a single lysine to coordinate two nickel ions.

It localises to the cytoplasm. The enzyme catalyses urea + 2 H2O + H(+) = hydrogencarbonate + 2 NH4(+). The protein operates within nitrogen metabolism; urea degradation; CO(2) and NH(3) from urea (urease route): step 1/1. In Lachnoclostridium phytofermentans (strain ATCC 700394 / DSM 18823 / ISDg) (Clostridium phytofermentans), this protein is Urease subunit alpha.